We begin with the raw amino-acid sequence, 393 residues long: PxcA-like protein (393 aa).

4 consecutive transmembrane segments (helical) span residues 173-193 (FLIV…NLVF), 271-291 (IVNL…IIVF), 306-326 (FLAL…DMFV), and 354-374 (VYIF…LLIF).

It belongs to the CemA family. PxcL subfamily.

The protein resides in the cell inner membrane. Together with PxcA, contributes to transient H(+) uptake following dark to light transition. Required for H(+) influx to activate the Calvin-Benson-Bassham cycle. May also be involved in CO(2) transport. The protein is PxcA-like protein of Synechocystis sp. (strain ATCC 27184 / PCC 6803 / Kazusa).